Reading from the N-terminus, the 377-residue chain is Protein RecA (377 aa).

76 to 83 (GPESSGKT) is an ATP binding site. Positions 346–377 (TNGNNGEDHEGTEPVEIEAEDAAPKKGKKGKH) are disordered.

This sequence belongs to the RecA family.

The protein resides in the cytoplasm. In terms of biological role, can catalyze the hydrolysis of ATP in the presence of single-stranded DNA, the ATP-dependent uptake of single-stranded DNA by duplex DNA, and the ATP-dependent hybridization of homologous single-stranded DNAs. It interacts with LexA causing its activation and leading to its autocatalytic cleavage. The chain is Protein RecA from Bdellovibrio bacteriovorus (strain ATCC 15356 / DSM 50701 / NCIMB 9529 / HD100).